Consider the following 206-residue polypeptide: Octanoyltransferase (206 aa).

The region spanning 30 to 206 (PETNDEIWLV…EFVTLLNNSI (177 aa)) is the BPL/LPL catalytic domain. Residues 69–76 (RGGQVTYH), 137–139 (SLG), and 150–152 (GIA) contribute to the substrate site. The Acyl-thioester intermediate role is filled by Cys-168.

This sequence belongs to the LipB family.

Its subcellular location is the cytoplasm. The enzyme catalyses octanoyl-[ACP] + L-lysyl-[protein] = N(6)-octanoyl-L-lysyl-[protein] + holo-[ACP] + H(+). Its pathway is protein modification; protein lipoylation via endogenous pathway; protein N(6)-(lipoyl)lysine from octanoyl-[acyl-carrier-protein]: step 1/2. Functionally, catalyzes the transfer of endogenously produced octanoic acid from octanoyl-acyl-carrier-protein onto the lipoyl domains of lipoate-dependent enzymes. Lipoyl-ACP can also act as a substrate although octanoyl-ACP is likely to be the physiological substrate. In Francisella tularensis subsp. novicida (strain U112), this protein is Octanoyltransferase.